Consider the following 268-residue polypeptide: MMQEGGLPRAKKRFGQNFLVQPQIVERIVAAIRPASGDHLVEIGPGPGALTKSLLRLLPQFTVVELDRDMIAGLRALAPPEQLRVLQADALEVDFAALAGAGNALRIVGNLPYNVATPLIFHILEHAEQVRDMHFMLQKEVVDRVVAMPGSKAYGRLSVMIQAYCAVESLFTVAPGNFFPVPKVDSAFMRLIPHRPGLLPPHLQAPFARIVATSFAQRRKTLANNLRGILSADDLRGLQIDPGSRAETLDQAAFFRLAEATVEQGNRS.

Positions 17, 19, 44, 65, 89, and 110 each coordinate S-adenosyl-L-methionine.

Belongs to the class I-like SAM-binding methyltransferase superfamily. rRNA adenine N(6)-methyltransferase family. RsmA subfamily.

Its subcellular location is the cytoplasm. It catalyses the reaction adenosine(1518)/adenosine(1519) in 16S rRNA + 4 S-adenosyl-L-methionine = N(6)-dimethyladenosine(1518)/N(6)-dimethyladenosine(1519) in 16S rRNA + 4 S-adenosyl-L-homocysteine + 4 H(+). Functionally, specifically dimethylates two adjacent adenosines (A1518 and A1519) in the loop of a conserved hairpin near the 3'-end of 16S rRNA in the 30S particle. May play a critical role in biogenesis of 30S subunits. This Acidithiobacillus ferrooxidans (strain ATCC 53993 / BNL-5-31) (Leptospirillum ferrooxidans (ATCC 53993)) protein is Ribosomal RNA small subunit methyltransferase A.